Consider the following 519-residue polypeptide: 2-isopropylmalate synthase (519 aa).

The Pyruvate carboxyltransferase domain maps to 5–267 (VIIFDTTLRD…YTNIHHHEIY (263 aa)). 4 residues coordinate Mn(2+): aspartate 14, histidine 202, histidine 204, and asparagine 238. Positions 392-519 (ALESFHIHST…NHKNTQHIKK (128 aa)) are regulatory domain.

Belongs to the alpha-IPM synthase/homocitrate synthase family. LeuA type 1 subfamily. Homodimer. It depends on Mn(2+) as a cofactor.

It is found in the cytoplasm. The catalysed reaction is 3-methyl-2-oxobutanoate + acetyl-CoA + H2O = (2S)-2-isopropylmalate + CoA + H(+). The protein operates within amino-acid biosynthesis; L-leucine biosynthesis; L-leucine from 3-methyl-2-oxobutanoate: step 1/4. Its function is as follows. Catalyzes the condensation of the acetyl group of acetyl-CoA with 3-methyl-2-oxobutanoate (2-ketoisovalerate) to form 3-carboxy-3-hydroxy-4-methylpentanoate (2-isopropylmalate). The protein is 2-isopropylmalate synthase of Blochmanniella floridana.